Reading from the N-terminus, the 457-residue chain is uncharacterized protein (457 aa).

The region spanning 5–63 (PVKKNDVIEVEIIDLTHEGLGVAKVDHYPLFIENALPGEKLEIKVLKTGKSFGYGKVLT) is the TRAM domain. Residues Gln-287, Tyr-316, Glu-337, and Asp-385 each contribute to the S-adenosyl-L-methionine site. The Nucleophile role is filled by Cys-412.

The protein belongs to the class I-like SAM-binding methyltransferase superfamily. RNA M5U methyltransferase family.

This is an uncharacterized protein from Enterococcus faecalis (strain ATCC 700802 / V583).